The sequence spans 211 residues: Urease accessory protein UreG (211 aa).

8 to 15 (GPVGSGKT) lines the GTP pocket.

This sequence belongs to the SIMIBI class G3E GTPase family. UreG subfamily. As to quaternary structure, homodimer. UreD, UreF and UreG form a complex that acts as a GTP-hydrolysis-dependent molecular chaperone, activating the urease apoprotein by helping to assemble the nickel containing metallocenter of UreC. The UreE protein probably delivers the nickel.

It is found in the cytoplasm. In terms of biological role, facilitates the functional incorporation of the urease nickel metallocenter. This process requires GTP hydrolysis, probably effectuated by UreG. In Metallosphaera sedula (strain ATCC 51363 / DSM 5348 / JCM 9185 / NBRC 15509 / TH2), this protein is Urease accessory protein UreG.